The chain runs to 172 residues: Protein/nucleic acid deglycase 2 (172 aa).

A PfpI endopeptidase domain is found at 3–171 (KKIAVLITDE…FNREALRLLG (169 aa)). C104 serves as the catalytic Nucleophile.

This sequence belongs to the peptidase C56 family. In terms of assembly, exists in monomeric, trimeric, and hexameric forms.

The protein localises to the cytoplasm. The enzyme catalyses N(omega)-(1-hydroxy-2-oxopropyl)-L-arginyl-[protein] + H2O = lactate + L-arginyl-[protein] + H(+). The catalysed reaction is N(6)-(1-hydroxy-2-oxopropyl)-L-lysyl-[protein] + H2O = lactate + L-lysyl-[protein] + H(+). It carries out the reaction S-(1-hydroxy-2-oxopropyl)-L-cysteinyl-[protein] + H2O = lactate + L-cysteinyl-[protein] + H(+). It catalyses the reaction N(omega)-(1-hydroxy-2-oxoethyl)-L-arginyl-[protein] + H2O = L-arginyl-[protein] + glycolate + H(+). The enzyme catalyses N(6)-(1-hydroxy-2-oxoethyl)-L-lysyl-[protein] + H2O = glycolate + L-lysyl-[protein] + H(+). The catalysed reaction is S-(1-hydroxy-2-oxoethyl)-L-cysteinyl-[protein] + H2O = glycolate + L-cysteinyl-[protein] + H(+). It carries out the reaction N(2)-(1-hydroxy-2-oxopropyl)-dGTP + H2O = lactate + dGTP + H(+). It catalyses the reaction N(2)-(1-hydroxy-2-oxopropyl)-GTP + H2O = lactate + GTP + H(+). The enzyme catalyses N(2)-(1-hydroxy-2-oxopropyl)-GDP + H2O = lactate + GDP + H(+). The catalysed reaction is N(2)-(1-hydroxy-2-oxopropyl)-GMP + H2O = lactate + GMP + H(+). It carries out the reaction N(2)-(1-hydroxy-2-oxoethyl)-dGTP + H2O = dGTP + glycolate + H(+). It catalyses the reaction N(2)-(1-hydroxy-2-oxoethyl)-GTP + H2O = glycolate + GTP + H(+). The enzyme catalyses N(2)-(1-hydroxy-2-oxoethyl)-GDP + H2O = glycolate + GDP + H(+). The catalysed reaction is N(2)-(1-hydroxy-2-oxoethyl)-GMP + H2O = glycolate + GMP + H(+). It carries out the reaction an N(2)-(1-hydroxy-2-oxopropyl)-guanosine in RNA + H2O = a guanosine in RNA + lactate + H(+). It catalyses the reaction an N(2)-(1-hydroxy-2-oxopropyl)-2'-deoxyguanosine in DNA + H2O = a 2'-deoxyguanosine in DNA + lactate + H(+). The enzyme catalyses an N(2)-(1-hydroxy-2-oxoethyl)-guanosine in RNA + H2O = a guanosine in RNA + glycolate + H(+). The catalysed reaction is an N(2)-(1-hydroxy-2-oxoethyl)-2'-deoxyguanosine in DNA + H2O = a 2'-deoxyguanosine in DNA + glycolate + H(+). With respect to regulation, glyoxalase activity is inhibited by zinc ions at pH 7.0. Protein and nucleotide deglycase that catalyzes the deglycation of the Maillard adducts formed between amino groups of proteins or nucleotides and reactive carbonyl groups of glyoxals. Thus, functions as a protein deglycase that repairs methylglyoxal- and glyoxal-glycated proteins, and releases repaired proteins and lactate or glycolate, respectively. Deglycates cysteine, arginine and lysine residues in proteins, and thus reactivates these proteins by reversing glycation by glyoxals. Is able to repair glycated serum albumin, collagen, glyceraldehyde-3-phosphate dehydrogenase, and fructose biphosphate aldolase. Acts on early glycation intermediates (hemithioacetals and aminocarbinols), preventing the formation of advanced glycation endproducts (AGE) that cause irreversible damage. Also functions as a nucleotide deglycase able to repair glycated guanine in the free nucleotide pool (GTP, GDP, GMP, dGTP) and in DNA and RNA. Is thus involved in a major nucleotide repair system named guanine glycation repair (GG repair), dedicated to reversing methylglyoxal and glyoxal damage via nucleotide sanitization and direct nucleic acid repair. In vitro, prevents acrylamide formation in asparagine/glyoxal and asparagine/sugar mixtures at 55 degrees Celsius, likely by degrading asparagine/glyoxal Maillard adducts formed at high temperatures. Also displays an apparent glyoxalase activity that in fact reflects its deglycase activity. Is a general stress protein; is required for the protection of bacterial cells against many environmental stresses, including oxidative, thermal, osmotic, UV, and pH stresses. And plays an important role in protection against electrophile/carbonyl stress. The polypeptide is Protein/nucleic acid deglycase 2 (yhbO) (Escherichia coli (strain K12)).